We begin with the raw amino-acid sequence, 449 residues long: Glycosyl hydrolase-like protein 1 (449 aa).

Residues glutamine 22, histidine 119, 164 to 165 (NE), tyrosine 292, glutamate 350, tryptophan 393, and tyrosine 406 contribute to the a beta-D-glucoside site. The active-site Proton donor is glutamate 165. Glutamate 350 acts as the Nucleophile in catalysis.

Belongs to the glycosyl hydrolase 1 family. Mainly expressed in flowers, flower buds and young leaves, and, to a lesser extent, in old leaves, stems and roots.

The protein localises to the cytoplasm. It functions in the pathway secondary metabolite biosynthesis; terpenoid biosynthesis. Component of the oleanane-type triterpene saponins (e.g. saponarioside A and saponarioside B) biosynthetic pathway, leading to the production of natural products with detergent properties used as traditional sources of soap. Beta-glycosidase that catalyzes the transfer of glucose moiety to QA-triFRXX to produce QA-triF(Q)RXX via the elongation of the C-28 sugar chain with a D-quinovose. The protein is Glycosyl hydrolase-like protein 1 of Saponaria officinalis (Common soapwort).